Consider the following 315-residue polypeptide: UDP-N-acetylenolpyruvoylglucosamine reductase (315 aa).

The FAD-binding PCMH-type domain occupies 27 to 207; the sequence is RVGGPADVLY…TKRMNAITAR (181 aa). Arg172 is an active-site residue. Positions 214–236 are disordered; it reads IREKTSGSTFANPDPPGTPNQRK. The active-site Proton donor is Ser221. The active site involves Glu297.

Belongs to the MurB family. It depends on FAD as a cofactor.

It is found in the cytoplasm. It catalyses the reaction UDP-N-acetyl-alpha-D-muramate + NADP(+) = UDP-N-acetyl-3-O-(1-carboxyvinyl)-alpha-D-glucosamine + NADPH + H(+). The protein operates within cell wall biogenesis; peptidoglycan biosynthesis. In terms of biological role, cell wall formation. This chain is UDP-N-acetylenolpyruvoylglucosamine reductase, found in Maricaulis maris (strain MCS10) (Caulobacter maris).